The sequence spans 352 residues: DNA-directed RNA polymerase subunit alpha (352 aa).

The tract at residues M1 to N226 is alpha N-terminal domain (alpha-NTD). Positions H243 to L352 are alpha C-terminal domain (alpha-CTD). Positions D324–L352 are disordered. The segment covering S326–D338 has biased composition (polar residues). Positions D340–L352 are enriched in acidic residues.

Belongs to the RNA polymerase alpha chain family. As to quaternary structure, homodimer. The RNAP catalytic core consists of 2 alpha, 1 beta, 1 beta' and 1 omega subunit. When a sigma factor is associated with the core the holoenzyme is formed, which can initiate transcription.

The enzyme catalyses RNA(n) + a ribonucleoside 5'-triphosphate = RNA(n+1) + diphosphate. Its function is as follows. DNA-dependent RNA polymerase catalyzes the transcription of DNA into RNA using the four ribonucleoside triphosphates as substrates. This is DNA-directed RNA polymerase subunit alpha from Nocardia farcinica (strain IFM 10152).